The following is a 159-amino-acid chain: Putative ribosomal RNA large subunit methyltransferase H (159 aa).

S-adenosyl-L-methionine contacts are provided by residues Leu76, Gly108, and 127–132; that span reads FSKMTF.

This sequence belongs to the RNA methyltransferase RlmH family.

It is found in the cytoplasm. The catalysed reaction is pseudouridine(1915) in 23S rRNA + S-adenosyl-L-methionine = N(3)-methylpseudouridine(1915) in 23S rRNA + S-adenosyl-L-homocysteine + H(+). In terms of biological role, specifically methylates the pseudouridine at position 1915 (m3Psi1915) in 23S rRNA. This Methanococcus maripaludis (strain DSM 14266 / JCM 13030 / NBRC 101832 / S2 / LL) protein is Putative ribosomal RNA large subunit methyltransferase H.